Here is a 426-residue protein sequence, read N- to C-terminus: Glutamyl-tRNA reductase (426 aa).

Substrate-binding positions include 49–52, S109, 114–116, and Q120; these read TCNR and EGQ. The active-site Nucleophile is C50. 189-194 lines the NADP(+) pocket; sequence GAGETG.

It belongs to the glutamyl-tRNA reductase family. As to quaternary structure, homodimer.

It carries out the reaction (S)-4-amino-5-oxopentanoate + tRNA(Glu) + NADP(+) = L-glutamyl-tRNA(Glu) + NADPH + H(+). Its pathway is porphyrin-containing compound metabolism; protoporphyrin-IX biosynthesis; 5-aminolevulinate from L-glutamyl-tRNA(Glu): step 1/2. Catalyzes the NADPH-dependent reduction of glutamyl-tRNA(Glu) to glutamate 1-semialdehyde (GSA). The polypeptide is Glutamyl-tRNA reductase (hemA) (Chlorobaculum parvum (strain DSM 263 / NCIMB 8327) (Chlorobium vibrioforme subsp. thiosulfatophilum)).